Reading from the N-terminus, the 239-residue chain is Probable transcriptional regulatory protein BC_0539 (239 aa).

This sequence belongs to the TACO1 family. YeeN subfamily.

The protein resides in the cytoplasm. This Bacillus cereus (strain ATCC 14579 / DSM 31 / CCUG 7414 / JCM 2152 / NBRC 15305 / NCIMB 9373 / NCTC 2599 / NRRL B-3711) protein is Probable transcriptional regulatory protein BC_0539.